Here is a 660-residue protein sequence, read N- to C-terminus: tRNA 5-methylaminomethyl-2-thiouridine biosynthesis bifunctional protein MnmC (660 aa).

A tRNA (mnm(5)s(2)U34)-methyltransferase region spans residues 1–242 (MTDRIVPATL…KRAMLVGEFA (242 aa)). The tract at residues 266–660 (IGAGLAGCAV…VRALRHGRVA (395 aa)) is FAD-dependent cmnm(5)s(2)U34 oxidoreductase.

The protein in the N-terminal section; belongs to the methyltransferase superfamily. tRNA (mnm(5)s(2)U34)-methyltransferase family. It in the C-terminal section; belongs to the DAO family. FAD serves as cofactor.

The protein resides in the cytoplasm. It carries out the reaction 5-aminomethyl-2-thiouridine(34) in tRNA + S-adenosyl-L-methionine = 5-methylaminomethyl-2-thiouridine(34) in tRNA + S-adenosyl-L-homocysteine + H(+). Functionally, catalyzes the last two steps in the biosynthesis of 5-methylaminomethyl-2-thiouridine (mnm(5)s(2)U) at the wobble position (U34) in tRNA. Catalyzes the FAD-dependent demodification of cmnm(5)s(2)U34 to nm(5)s(2)U34, followed by the transfer of a methyl group from S-adenosyl-L-methionine to nm(5)s(2)U34, to form mnm(5)s(2)U34. In Burkholderia pseudomallei (strain 1710b), this protein is tRNA 5-methylaminomethyl-2-thiouridine biosynthesis bifunctional protein MnmC.